The following is a 95-amino-acid chain: MILVTYDVNTVEPGGRRRLRQVAKACQDYGQRVQNSVFEVEVDPARWVALKARLEAIIDPALDSLRYYDLGANWQRRVDHVGAKPAVDLHGPLIL.

A Mg(2+)-binding site is contributed by D7.

It belongs to the CRISPR-associated endoribonuclease Cas2 protein family. As to quaternary structure, homodimer, forms a heterotetramer with a Cas1 homodimer. Requires Mg(2+) as cofactor.

Functionally, CRISPR (clustered regularly interspaced short palindromic repeat), is an adaptive immune system that provides protection against mobile genetic elements (viruses, transposable elements and conjugative plasmids). CRISPR clusters contain sequences complementary to antecedent mobile elements and target invading nucleic acids. CRISPR clusters are transcribed and processed into CRISPR RNA (crRNA). Functions as a ssRNA-specific endoribonuclease. Involved in the integration of spacer DNA into the CRISPR cassette. This is CRISPR-associated endoribonuclease Cas2 3 from Rhodospirillum rubrum (strain ATCC 11170 / ATH 1.1.1 / DSM 467 / LMG 4362 / NCIMB 8255 / S1).